Consider the following 434-residue polypeptide: Evolutionarily conserved signaling intermediate in Toll pathway, mitochondrial (434 aa).

The transit peptide at 1-48 directs the protein to the mitochondrion; that stretch reads MSWVQVNLLARGLSRGWGSICRTVLSGTPFAQPSLQARGLHCSAVTHK. Lys-371 participates in a covalent cross-link: Glycyl lysine isopeptide (Lys-Gly) (interchain with G-Cter in ubiquitin). Residues 403–434 form a disordered region; it reads TRLEGQSPPHSPPKGPEEDDEAIQAQQRQGQS.

The protein belongs to the ECSIT family. In terms of assembly, interacts with MAP3K1, SMAD4 and TRAF6. Interacts with SMAD1 only after BMP4-treatment. Part of the mitochondrial complex I assembly/MCIA complex that comprises at least the core subunits TMEM126B, NDUFAF1, ECSIT and ACAD9 and complement subunits such as COA1 and TMEM186. Interacts with NDUFAF1. Interacts with ACAD9. Interacts with TRIM59. Interacts with TMEM70 and TMEM242. Interacts (when ubiquitinated) with NF-kappa-B subunits RELA and NFKB1. Interacts with RIGI, IFIT1 and MAVS; these interactions promote RLR-mediated type I IFN induction. Interacts with SQSTM1; this interaction inhibits TLR4 signaling via functional regulation of the TRAF6-ECSIT complex. Interacts with cereblon/CRBN; this interaction inhibits the ubiquitination of ECSIT. Ubiquitinated on Lys-371; leading to translocation in the nucleus together with RELA and NFKB1 and expression of NF-kappa-B-dependent genes.

The protein localises to the cytoplasm. Its subcellular location is the nucleus. It localises to the mitochondrion. Functionally, adapter protein that plays a role in different signaling pathways including TLRs and IL-1 pathways or innate antiviral induction signaling. Plays a role in the activation of NF-kappa-B by forming a signal complex with TRAF6 and TAK1/MAP3K7 to activate TAK1/MAP3K7 leading to activation of IKKs. Once ubiquitinated, interacts with the dissociated RELA and NFKB1 proteins and translocates to the nucleus where it induces NF-kappa-B-dependent gene expression. Plays a role in innate antiviral immune response by bridging the pattern recognition receptors RIGI and MDA5/IFIT1 to the MAVS complex at the mitochondrion. Promotes proteolytic activation of MAP3K1. Involved in the BMP signaling pathway. Required for normal embryonic development. In terms of biological role, as part of the MCIA complex, involved in the assembly of the mitochondrial complex I. The sequence is that of Evolutionarily conserved signaling intermediate in Toll pathway, mitochondrial from Rattus norvegicus (Rat).